Consider the following 368-residue polypeptide: tRNA-cytidine(32) 2-sulfurtransferase (368 aa).

The PP-loop motif signature appears at 95–100 (SGGKDS). 3 residues coordinate [4Fe-4S] cluster: cysteine 170, cysteine 173, and cysteine 261.

This sequence belongs to the TtcA family. Homodimer. Mg(2+) is required as a cofactor. The cofactor is [4Fe-4S] cluster.

The protein localises to the cytoplasm. It catalyses the reaction cytidine(32) in tRNA + S-sulfanyl-L-cysteinyl-[cysteine desulfurase] + AH2 + ATP = 2-thiocytidine(32) in tRNA + L-cysteinyl-[cysteine desulfurase] + A + AMP + diphosphate + H(+). It participates in tRNA modification. Catalyzes the ATP-dependent 2-thiolation of cytidine in position 32 of tRNA, to form 2-thiocytidine (s(2)C32). The sulfur atoms are provided by the cysteine/cysteine desulfurase (IscS) system. The polypeptide is tRNA-cytidine(32) 2-sulfurtransferase (Psychrobacter sp. (strain PRwf-1)).